The primary structure comprises 37 residues: Chorion class CB protein PCH12 (37 aa).

The interval 1–26 (DGIFPTVGAGDVWYGCGDGAVGIVAE) is central domain. The interval 27-37 (TPFASTTTNPA) is right arm.

The protein belongs to the chorion protein family.

In terms of biological role, this protein is one of many from the eggshell of the silk moth. In Antheraea polyphemus (Polyphemus moth), this protein is Chorion class CB protein PCH12.